The primary structure comprises 433 residues: Inward rectifier potassium channel 18 (433 aa).

Over 1-77 the chain is Cytoplasmic; the sequence is MTAASRANPY…LADMFTTCVD (77 aa). Residues 78 to 104 traverse the membrane as a helical segment; sequence IRWRYMLLIFSLAFLASWLLFGVIFWV. Residues 105 to 129 are Extracellular-facing; sequence IAVAHGDLEPAEGHGRTPCVMQVHG. Positions 130–146 form an intramembrane region, helical; Pore-forming; sequence FMAAFLFSIETQTTIGY. The Selectivity filter motif lies at 143–148; that stretch reads TIGYGL. At 147–155 the chain is on the extracellular side; that stretch reads GLRCVTEEC. A helical membrane pass occupies residues 156–183; it reads LVAVFMVVAQSIVGCIIDSFMIGAIMAK. Residues 184-433 lie on the Cytoplasmic side of the membrane; sequence MARPKKRAQT…QRPYRRGSEI (250 aa). The segment at 387-433 is disordered; that stretch reads DEEDEADGDQDGRSRDGLSPQARHDFDRLQAGGGVLEQRPYRRGSEI. The span at 396-414 shows a compositional bias: basic and acidic residues; sequence QDGRSRDGLSPQARHDFDR.

This sequence belongs to the inward rectifier-type potassium channel (TC 1.A.2.1) family. KCNJ12 subfamily. Can form heteromeric channels with Kir2.1/KCNJ2. Can form heteromeric channels with Kir2.2/KCNJ12. Probably phosphorylated by PKC; decreases single-channel open probability. In terms of tissue distribution, specifically expressed in skeletal muscle.

It is found in the cell membrane. The protein localises to the endoplasmic reticulum. The enzyme catalyses K(+)(in) = K(+)(out). Its function is as follows. Inward rectifier potassium channels are characterized by a greater tendency to allow potassium to flow into the cell rather than out of it. Their voltage dependence is regulated by the concentration of extracellular potassium; as external potassium is raised, the voltage range of the channel opening shifts to more positive voltages. The inward rectification is mainly due to the blockage of outward current by internal magnesium. The polypeptide is Inward rectifier potassium channel 18 (KCNJ18) (Homo sapiens (Human)).